The chain runs to 328 residues: GMP reductase (328 aa).

The active-site Thioimidate intermediate is the Cys176. 205–228 is a binding site for NADP(+); it reads IIADGGIRTHGDIAKSIRFGASMI.

It belongs to the IMPDH/GMPR family. GuaC type 2 subfamily.

The catalysed reaction is IMP + NH4(+) + NADP(+) = GMP + NADPH + 2 H(+). Catalyzes the irreversible NADPH-dependent deamination of GMP to IMP. It functions in the conversion of nucleobase, nucleoside and nucleotide derivatives of G to A nucleotides, and in maintaining the intracellular balance of A and G nucleotides. In Streptococcus pneumoniae serotype 2 (strain D39 / NCTC 7466), this protein is GMP reductase.